The primary structure comprises 374 residues: Speckle-type POZ protein B (374 aa).

The MATH domain maps to 31-161 (KFSYMWTINN…DDKLTLFCEV (131 aa)). Positions 71-191 (VNPKGLDEES…PECRLSDELG (121 aa)) are required for nuclear localization. In terms of domain architecture, BTB spans 173–297 (QNTMNMVKVP…MCEEALCSNL (125 aa)). Residues 297 to 355 (LSVENAAEILILADLHSADQLKTQAVDFINYHASDVMETSGWKSMVVSHPHLVAEAYRS) form a homodimerization region.

This sequence belongs to the Tdpoz family. Homodimer. Part of cullin-RING-based BCR (BTB-CUL3-RBX1) E3 ubiquitin-protein ligase complexes that contain CUL3 and SPOP, plus a target protein.

It is found in the nucleus. Its subcellular location is the nucleus speckle. It functions in the pathway protein modification; protein ubiquitination. In terms of biological role, component of a cullin-RING-based BCR (BTB-CUL3-RBX1) E3 ubiquitin-protein ligase complex that mediates the ubiquitination of target proteins, leading most often to their proteasomal degradation. The protein is Speckle-type POZ protein B (spop-b) of Xenopus laevis (African clawed frog).